We begin with the raw amino-acid sequence, 378 residues long: MSTPHIVVGVSGGVDSSVAAWKLAQQGEPIAGLFMQNWADDGSGDCRAEDDRRDAVAVCGVLGMPFHFRDFSGEYWSGVFEHFLAEYAAGRTPNPDVLCNREVKFKHFLDAAQALGAERIATGHYAQVAHRGGRWRLLRGADRDKDQSYFLHQLGQSQLAATLFPIGDLEKSTLRRIARDAGLPTHAKKDSTGICFIGERDFREFLGRYLPARTGEIRDPQGQRIAEHPGVFYFTLGQREGLNIGGVRGRAAAPWYVVGKDVASNVLYVDQDRDSPLLQSRWLQSEQAHWVTGAPPARRFSCTAQTRYRQPDEPCTVDVQDDGSVQVHFERPQRAVTPGQSLVLYDGKECLGGAVIAATDAPLERQLAGSSFSSEVVA.

ATP is bound by residues 9–16 (GVSGGVDS) and methionine 35. Residues 94-96 (NPD) are interaction with target base in tRNA. Residue cysteine 99 is the Nucleophile of the active site. Residues cysteine 99 and cysteine 195 are joined by a disulfide bond. ATP is bound at residue glycine 123. Residues 145 to 147 (KDQ) form an interaction with tRNA region. The active-site Cysteine persulfide intermediate is the cysteine 195. The interaction with tRNA stretch occupies residues 307–308 (RY).

This sequence belongs to the MnmA/TRMU family.

It is found in the cytoplasm. It carries out the reaction S-sulfanyl-L-cysteinyl-[protein] + uridine(34) in tRNA + AH2 + ATP = 2-thiouridine(34) in tRNA + L-cysteinyl-[protein] + A + AMP + diphosphate + H(+). Catalyzes the 2-thiolation of uridine at the wobble position (U34) of tRNA, leading to the formation of s(2)U34. In Xanthomonas oryzae pv. oryzae (strain PXO99A), this protein is tRNA-specific 2-thiouridylase MnmA.